The sequence spans 168 residues: Plasma membrane-associated cation-binding protein 2 (168 aa).

A lipid anchor (N-myristoyl glycine) is attached at G2. A run of 7 repeats spans residues 26–30 (VEEEK), 69–73 (VEEKK), 94–99 (VEEEKK), 103–107 (VEEKK), 110–115 (VEEEKK), 118–122 (VEEKK), and 124–129 (VEEEKK). A 7 X 5 AA approximate repeats of V-E-E-K-K region spans residues 26 to 129 (VEEEKPREVE…EKKPVEEEKK (104 aa)). A coiled-coil region spans residues 56-77 (EEIIATGEKEIEIVEEKKEEAK). The span at 88-131 (EEKKPAVEEEKKTAPVEEKKPAVEEEKKPAVEEKKPVEEEKKEV) shows a compositional bias: basic and acidic residues. Residues 88–168 (EEKKPAVEEE…ETPAAAPQKA (81 aa)) form a disordered region. Residues 152–168 (ETPAKAPETPAAAPQKA) are compositionally biased toward low complexity.

Belongs to the DREPP family. In terms of assembly, binds microtubules. Interacts with calcium ion Ca(2+), calmodulin and some phosphatidylinositol phosphates (PtdInsPs) such as phosphatidylinositol 3,5-bisphosphate [PtdIns(3,5)P(2)], PtdIns(4,5)P(2) and PtdIns(3,4,5)P(3). Cu(2+) is required as a cofactor. As to expression, mostly expressed in the expanding cells, specifically in roots (except in root tips) and flowers (at protein level). Also detected in cotyledons, hypocotyls and trichome stalks.

It is found in the cell membrane. Its subcellular location is the cytoplasm. The protein resides in the cytoskeleton. Its function is as follows. May be involved in intracellular signaling through interaction with PtdInsPs and calmodulin (CaM); may keep PtdInsPs attached to the plasma membrane until Ca(2+)-CaM reaches a competitive concentration subsequent to an increase triggered by a stimulus, thus leading to PtdInsPs release and subsequent activation of InsPs-dependent signaling cascade. Binds to microtubules and inhibits tubulin polymerization. Regulates directional cell growth and cortical microtubule organization by destabilizing microtubules (e.g. in cotyledon pavement cells). This chain is Plasma membrane-associated cation-binding protein 2, found in Arabidopsis thaliana (Mouse-ear cress).